Reading from the N-terminus, the 426-residue chain is MLNIKWIRENQELFDDKLRQRFIEPMAKRIEELDGKKRKITNLIQEFQHARKVKSKILGNINPKSGEEFEGLQRDVKDINEKLEELEQDLNNNNELNELLNTLPNIPDEEVPYGIDESMNKLIRTHGEVDLNAQNKKQHFELGVKLDLMDFEQTAKISGARFVTLKGDLAKLERALANFMLDVHTGEFGFLEVSPPVLVRDNAMYNSGQLPKFADESFATTNGYRLIPTAEVSLVNMVADTIIPREKLPMRLVAYTPCFRSEAGSSGRDTRGMIRLHQFSKVELVSITTPEESKNEHEYMTNASETILQKLGLHYRTMLLCTGDMGFASQKTYDIEVWLPGQKQYREIASCSNCGDFQARRMKARYKEFGSHDTTLVHTLNASGLPIGRTMVAILENYQNEDGSITVPDVLVNYMGGLQKITAYKE.

Position 229–231 (229–231 (TAE)) interacts with L-serine. 260–262 (RSE) contacts ATP. An L-serine-binding site is contributed by glutamate 283. 347 to 350 (EIAS) is a binding site for ATP. Residue serine 383 participates in L-serine binding.

It belongs to the class-II aminoacyl-tRNA synthetase family. Type-1 seryl-tRNA synthetase subfamily. As to quaternary structure, homodimer. The tRNA molecule binds across the dimer.

It is found in the cytoplasm. It carries out the reaction tRNA(Ser) + L-serine + ATP = L-seryl-tRNA(Ser) + AMP + diphosphate + H(+). It catalyses the reaction tRNA(Sec) + L-serine + ATP = L-seryl-tRNA(Sec) + AMP + diphosphate + H(+). It functions in the pathway aminoacyl-tRNA biosynthesis; selenocysteinyl-tRNA(Sec) biosynthesis; L-seryl-tRNA(Sec) from L-serine and tRNA(Sec): step 1/1. Catalyzes the attachment of serine to tRNA(Ser). Is also able to aminoacylate tRNA(Sec) with serine, to form the misacylated tRNA L-seryl-tRNA(Sec), which will be further converted into selenocysteinyl-tRNA(Sec). This Rickettsia bellii (strain RML369-C) protein is Serine--tRNA ligase.